A 378-amino-acid polypeptide reads, in one-letter code: Ribosomal RNA large subunit methyltransferase G (378 aa).

Belongs to the methyltransferase superfamily. RlmG family.

It is found in the cytoplasm. The catalysed reaction is guanosine(1835) in 23S rRNA + S-adenosyl-L-methionine = N(2)-methylguanosine(1835) in 23S rRNA + S-adenosyl-L-homocysteine + H(+). Functionally, specifically methylates the guanine in position 1835 (m2G1835) of 23S rRNA. In Shewanella baltica (strain OS155 / ATCC BAA-1091), this protein is Ribosomal RNA large subunit methyltransferase G.